A 513-amino-acid polypeptide reads, in one-letter code: Membrane protein (513 aa).

4 tandem repeats follow at residues 9 to 11, 12 to 14, 15 to 17, and 18 to 20. The interval 9-20 is 4 X 3 AA tandem repeats of P-S-A; the sequence is PSAPSAPSAPSA. The next 14 helical transmembrane spans lie at 32–52, 56–76, 79–99, 126–146, 165–185, 208–228, 254–274, 309–329, 332–352, 360–380, 400–420, 422–442, 447–467, and 487–507; these read LTLH…LAIP, GLTV…VVWI, AVSY…LIGF, TALA…VTGL, ILIG…SATA, NIAA…NVGI, QWLI…YFLV, LAAV…LHSF, ATVT…VMDW, PWGT…LLST, GALL…LGFA, ATAL…TLPG, VGMT…PINA, and IGIP…ATYW.

This sequence belongs to the SLC13A/DASS transporter (TC 2.A.47) family. DIT1 subfamily.

The protein resides in the cell membrane. The protein is Membrane protein of Cupriavidus necator (strain ATCC 17699 / DSM 428 / KCTC 22496 / NCIMB 10442 / H16 / Stanier 337) (Ralstonia eutropha).